The primary structure comprises 157 residues: Protein Smg (157 aa).

It belongs to the Smg family.

This chain is Protein Smg, found in Sodalis glossinidius (strain morsitans).